A 208-amino-acid chain; its full sequence is MVSKRVESLLNQLRTQGIVDERVLEAIALVPREKFVDEAFEHKAWENTALPIGQGQTISQPYMVARMTELLTLTPESRVLEIGTGSGYQTAILAHLVHHVCSVERIKSLQWQARRRLKQLDLHNVSTRHGDGWQGWQARAPFDAIIVTAAPPEIPTALLAQLDDEGVLVLPVGEEHQFLKRIRRRGNEFIIDTVEAVRFVPLVKGELA.

The active site involves S59.

It belongs to the methyltransferase superfamily. L-isoaspartyl/D-aspartyl protein methyltransferase family.

The protein localises to the cytoplasm. The catalysed reaction is [protein]-L-isoaspartate + S-adenosyl-L-methionine = [protein]-L-isoaspartate alpha-methyl ester + S-adenosyl-L-homocysteine. Its function is as follows. Catalyzes the methyl esterification of L-isoaspartyl residues in peptides and proteins that result from spontaneous decomposition of normal L-aspartyl and L-asparaginyl residues. It plays a role in the repair and/or degradation of damaged proteins. This is Protein-L-isoaspartate O-methyltransferase from Klebsiella pneumoniae (strain 342).